A 239-amino-acid polypeptide reads, in one-letter code: Retrotransposon Gag-like protein 6 (239 aa).

A coiled-coil region spans residues 29–69 (LTSLRLTNSALRREASTLRAEKANLTNMLESVMAELTLLRT). Residues 82–94 (PISSITSNGTRPM) show a composition bias toward polar residues. Disordered regions lie at residues 82–106 (PISS…EPFS) and 214–239 (TGPC…ARNL). The segment covering 228–239 (PAPALPARARNL) has biased composition (low complexity).

Belongs to the LDOC1 family.

This Homo sapiens (Human) protein is Retrotransposon Gag-like protein 6.